The chain runs to 353 residues: Nicotinate-nucleotide--dimethylbenzimidazole phosphoribosyltransferase (353 aa).

Residue glutamate 319 is the Proton acceptor of the active site.

It belongs to the CobT family.

It catalyses the reaction 5,6-dimethylbenzimidazole + nicotinate beta-D-ribonucleotide = alpha-ribazole 5'-phosphate + nicotinate + H(+). Its pathway is nucleoside biosynthesis; alpha-ribazole biosynthesis; alpha-ribazole from 5,6-dimethylbenzimidazole: step 1/2. Its function is as follows. Catalyzes the synthesis of alpha-ribazole-5'-phosphate from nicotinate mononucleotide (NAMN) and 5,6-dimethylbenzimidazole (DMB). The chain is Nicotinate-nucleotide--dimethylbenzimidazole phosphoribosyltransferase from Syntrophobacter fumaroxidans (strain DSM 10017 / MPOB).